Consider the following 512-residue polypeptide: Glutathione-binding protein GsiB (512 aa).

Residues 1-26 (MTQFITHKWLAALGLASSIAAFPALA) form the signal peptide.

Belongs to the bacterial solute-binding protein 5 family. In terms of assembly, the complex is composed of two ATP-binding proteins (GsiA), two transmembrane proteins (GsiC and GsiD) and a solute-binding protein (GsiB).

The protein localises to the periplasm. Functionally, part of the ABC transporter complex GsiABCD involved in glutathione import. Binds glutathione. The protein is Glutathione-binding protein GsiB of Salmonella paratyphi A (strain ATCC 9150 / SARB42).